The sequence spans 259 residues: Glutamate 5-kinase (259 aa).

Lys-18 serves as a coordination point for ATP. Substrate contacts are provided by Ser-54, Asp-141, and Asn-153. Ser-173 to Asp-174 serves as a coordination point for ATP.

This sequence belongs to the glutamate 5-kinase family.

It is found in the cytoplasm. The enzyme catalyses L-glutamate + ATP = L-glutamyl 5-phosphate + ADP. The protein operates within amino-acid biosynthesis; L-proline biosynthesis; L-glutamate 5-semialdehyde from L-glutamate: step 1/2. Its function is as follows. Catalyzes the transfer of a phosphate group to glutamate to form L-glutamate 5-phosphate. In Clavibacter sepedonicus (Clavibacter michiganensis subsp. sepedonicus), this protein is Glutamate 5-kinase.